We begin with the raw amino-acid sequence, 399 residues long: Fe-coproporphyrin III synthase (399 aa).

Residues 36-253 (KDKKPVVVWN…TRKLHEKGFP (218 aa)) form the Radical SAM core domain. [4Fe-4S] cluster is bound by residues C50, C54, and C57.

This sequence belongs to the radical SAM superfamily. [4Fe-4S] cluster serves as cofactor.

It carries out the reaction 12,18-didecarboxysiroheme + 2 AH2 + 2 S-adenosyl-L-methionine = Fe-coproporphyrin III + 2 5'-deoxyadenosine + 2 L-methionine + 2 acetate + 2 A + 2 H(+). The protein operates within porphyrin-containing compound metabolism; protoheme biosynthesis. Involved in siroheme-dependent heme b biosynthesis. Catalyzes the conversion of didecarboxysiroheme into Fe-coproporphyrin III by oxidative loss of two acetic acid side chains. In Methanosarcina barkeri (strain Fusaro / DSM 804), this protein is Fe-coproporphyrin III synthase.